Reading from the N-terminus, the 282-residue chain is Pantothenate synthetase (282 aa).

Position 30–37 (methionine 30–histidine 37) interacts with ATP. Catalysis depends on histidine 37, which acts as the Proton donor. Glutamine 61 is a binding site for (R)-pantoate. Glutamine 61 contacts beta-alanine. An ATP-binding site is contributed by glycine 147–aspartate 150. Position 153 (glutamine 153) interacts with (R)-pantoate. Residues valine 176 and lysine 184–arginine 187 each bind ATP.

It belongs to the pantothenate synthetase family. As to quaternary structure, homodimer.

The protein localises to the cytoplasm. The catalysed reaction is (R)-pantoate + beta-alanine + ATP = (R)-pantothenate + AMP + diphosphate + H(+). The protein operates within cofactor biosynthesis; (R)-pantothenate biosynthesis; (R)-pantothenate from (R)-pantoate and beta-alanine: step 1/1. Catalyzes the condensation of pantoate with beta-alanine in an ATP-dependent reaction via a pantoyl-adenylate intermediate. This is Pantothenate synthetase from Bacillus cereus (strain ATCC 14579 / DSM 31 / CCUG 7414 / JCM 2152 / NBRC 15305 / NCIMB 9373 / NCTC 2599 / NRRL B-3711).